The sequence spans 122 residues: Large ribosomal subunit protein uL14 (122 aa).

This sequence belongs to the universal ribosomal protein uL14 family. As to quaternary structure, part of the 50S ribosomal subunit. Forms a cluster with proteins L3 and L19. In the 70S ribosome, L14 and L19 interact and together make contacts with the 16S rRNA in bridges B5 and B8.

In terms of biological role, binds to 23S rRNA. Forms part of two intersubunit bridges in the 70S ribosome. The chain is Large ribosomal subunit protein uL14 from Gloeothece citriformis (strain PCC 7424) (Cyanothece sp. (strain PCC 7424)).